A 116-amino-acid polypeptide reads, in one-letter code: Large ribosomal subunit protein bL17 (116 aa).

The protein belongs to the bacterial ribosomal protein bL17 family. In terms of assembly, part of the 50S ribosomal subunit. Contacts protein L32.

The chain is Large ribosomal subunit protein bL17 from Gloeothece citriformis (strain PCC 7424) (Cyanothece sp. (strain PCC 7424)).